The sequence spans 99 residues: Small integral membrane protein 14 (99 aa).

Residues 1 to 49 lie on the Lumenal side of the membrane; the sequence is MAEGGFDPCECVCSHEHAMRRLINLLRQSQSYCTDTECLQELPGPSSDN. The chain crosses the membrane as a helical span at residues 50-70; it reads GISITMILMAWMVIAVILFLL. The Cytoplasmic segment spans residues 71-99; sequence RPPNLRGSNLTGKPASPHNGQDPPAPPVD. The tract at residues 78-99 is disordered; the sequence is SNLTGKPASPHNGQDPPAPPVD.

It localises to the endoplasmic reticulum membrane. The protein is Small integral membrane protein 14 (SMIM14) of Bos taurus (Bovine).